A 186-amino-acid chain; its full sequence is Ribosome-recycling factor (186 aa).

The interval glutamate 144 to lysine 163 is disordered.

The protein belongs to the RRF family.

It localises to the cytoplasm. Responsible for the release of ribosomes from messenger RNA at the termination of protein biosynthesis. May increase the efficiency of translation by recycling ribosomes from one round of translation to another. The polypeptide is Ribosome-recycling factor (Rhizobium etli (strain CIAT 652)).